Reading from the N-terminus, the 526-residue chain is Glucose-6-phosphate isomerase (526 aa).

Glu320 functions as the Proton donor in the catalytic mechanism. Active-site residues include His349 and Lys453.

This sequence belongs to the GPI family.

Its subcellular location is the cytoplasm. It carries out the reaction alpha-D-glucose 6-phosphate = beta-D-fructose 6-phosphate. The protein operates within carbohydrate biosynthesis; gluconeogenesis. It participates in carbohydrate degradation; glycolysis; D-glyceraldehyde 3-phosphate and glycerone phosphate from D-glucose: step 2/4. Functionally, catalyzes the reversible isomerization of glucose-6-phosphate to fructose-6-phosphate. The sequence is that of Glucose-6-phosphate isomerase from Rippkaea orientalis (strain PCC 8801 / RF-1) (Cyanothece sp. (strain PCC 8801)).